The sequence spans 682 residues: Heat shock 70 kDa protein 9, mitochondrial (682 aa).

The N-terminal 46 residues, 1 to 46 (MASVALLRSFRRREVQMASVSAFKSVSANGKNSMFGKLGYLARPFC), are a transit peptide targeting the mitochondrion. The interval 640 to 682 (SKIGEHMSKGSGSSGSDGSSGEGTSGTEQTPEAEFEEASGSRK) is disordered. The segment covering 651–663 (GSSGSDGSSGEGT) has biased composition (gly residues).

This sequence belongs to the heat shock protein 70 (TC 1.A.33) family. DnaK subfamily. In terms of assembly, interacts with HSCB.

The protein resides in the mitochondrion. The protein localises to the cytoplasm. It is found in the cytosol. In terms of biological role, chaperone involved in the maturation of iron-sulfur [Fe-S] cluster-containing proteins. Has a low intrinsic ATPase activity which is markedly stimulated by HSCB and ISU1. In cooperation with other chaperones, Hsp70s are key components that facilitate folding of de novo synthesized proteins, assist translocation of precursor proteins into organelles, and are responsible for degradation of damaged protein under stress conditions. In Arabidopsis thaliana (Mouse-ear cress), this protein is Heat shock 70 kDa protein 9, mitochondrial.